The following is a 152-amino-acid chain: Peptide deformylase (152 aa).

2 residues coordinate Fe cation: C88 and H130. E131 is a catalytic residue. H134 is a Fe cation binding site.

It belongs to the polypeptide deformylase family. Fe(2+) is required as a cofactor.

The catalysed reaction is N-terminal N-formyl-L-methionyl-[peptide] + H2O = N-terminal L-methionyl-[peptide] + formate. Functionally, removes the formyl group from the N-terminal Met of newly synthesized proteins. Requires at least a dipeptide for an efficient rate of reaction. N-terminal L-methionine is a prerequisite for activity but the enzyme has broad specificity at other positions. This chain is Peptide deformylase, found in Syntrophomonas wolfei subsp. wolfei (strain DSM 2245B / Goettingen).